A 112-amino-acid polypeptide reads, in one-letter code: MNATILVKIITPLSIALEKQAKMVTMSGEEGMFGVLPSHVPMIVSLKAGLVQVYIDDMHKSENTYLISGGVTEVTANYINIATDTAINVTNLSEAEIATKLLDLQKTLSDQH.

This sequence belongs to the ATPase epsilon chain family. In terms of assembly, F-type ATPases have 2 components, CF(1) - the catalytic core - and CF(0) - the membrane proton channel. CF(1) has five subunits: alpha(3), beta(3), gamma(1), delta(1), epsilon(1). CF(0) has three main subunits: a, b and c.

Its subcellular location is the cell inner membrane. Produces ATP from ADP in the presence of a proton gradient across the membrane. The chain is ATP synthase epsilon chain from Rickettsia peacockii (strain Rustic).